We begin with the raw amino-acid sequence, 308 residues long: Ribosomal RNA small subunit methyltransferase H (308 aa).

S-adenosyl-L-methionine-binding positions include 38–40 (GGH), Asp-58, Phe-82, Asp-99, and Gln-106.

It belongs to the methyltransferase superfamily. RsmH family.

It localises to the cytoplasm. It catalyses the reaction cytidine(1402) in 16S rRNA + S-adenosyl-L-methionine = N(4)-methylcytidine(1402) in 16S rRNA + S-adenosyl-L-homocysteine + H(+). Specifically methylates the N4 position of cytidine in position 1402 (C1402) of 16S rRNA. This chain is Ribosomal RNA small subunit methyltransferase H, found in Acidovorax ebreus (strain TPSY) (Diaphorobacter sp. (strain TPSY)).